Reading from the N-terminus, the 344-residue chain is S-adenosylmethionine:tRNA ribosyltransferase-isomerase (344 aa).

It belongs to the QueA family. As to quaternary structure, monomer.

The protein localises to the cytoplasm. It catalyses the reaction 7-aminomethyl-7-carbaguanosine(34) in tRNA + S-adenosyl-L-methionine = epoxyqueuosine(34) in tRNA + adenine + L-methionine + 2 H(+). Its pathway is tRNA modification; tRNA-queuosine biosynthesis. In terms of biological role, transfers and isomerizes the ribose moiety from AdoMet to the 7-aminomethyl group of 7-deazaguanine (preQ1-tRNA) to give epoxyqueuosine (oQ-tRNA). This chain is S-adenosylmethionine:tRNA ribosyltransferase-isomerase, found in Pediococcus pentosaceus (strain ATCC 25745 / CCUG 21536 / LMG 10740 / 183-1w).